Consider the following 135-residue polypeptide: Holo-[acyl-carrier-protein] synthase (135 aa).

Residues Asp-8 and Glu-58 each coordinate Mg(2+).

The protein belongs to the P-Pant transferase superfamily. AcpS family. It depends on Mg(2+) as a cofactor.

It is found in the cytoplasm. It carries out the reaction apo-[ACP] + CoA = holo-[ACP] + adenosine 3',5'-bisphosphate + H(+). In terms of biological role, transfers the 4'-phosphopantetheine moiety from coenzyme A to a Ser of acyl-carrier-protein. The protein is Holo-[acyl-carrier-protein] synthase of Leuconostoc citreum (strain KM20).